The following is a 795-amino-acid chain: Protein ROOT HAIR DEFECTIVE 3 homolog 1 (795 aa).

Over 1–682 (MDADKSEGCC…EANRRGNNWL (682 aa)) the chain is Cytoplasmic. In terms of domain architecture, GB1/RHD3-type G spans 39–254 (GLSYAVVSIM…IAPGGLAGDR (216 aa)). Position 49 to 56 (49 to 56 (GPQSSGKS)) interacts with GTP. A coiled-coil region spans residues 218–244 (VALSSYEEKEEQFKEQIASLRQRFMHS). Residues 683–703 (PPPWAILALIVLGFNEFMTLL) traverse the membrane as a helical segment. Residues 704 to 706 (RNP) are Lumenal-facing. The helical transmembrane segment at 707–727 (LYLGVMFVAFLLAKALWTQLD) threads the bilayer. The Cytoplasmic portion of the chain corresponds to 728-795 (IPGEFRNGAL…PDHKSSSKED (68 aa)). The disordered stretch occupies residues 761 to 795 (QGEDPPAANPENRRSSNNTSSSENPPDHKSSSKED). The segment covering 775–784 (SSNNTSSSEN) has biased composition (low complexity). Residues 785-795 (PPDHKSSSKED) show a composition bias toward basic and acidic residues.

This sequence belongs to the TRAFAC class dynamin-like GTPase superfamily. GB1/RHD3 GTPase family. RHD3 subfamily. In terms of tissue distribution, specifically expressed in flowers.

The protein resides in the endoplasmic reticulum membrane. Probable GTP-binding protein that may be involved in cell development. This chain is Protein ROOT HAIR DEFECTIVE 3 homolog 1, found in Arabidopsis thaliana (Mouse-ear cress).